A 106-amino-acid polypeptide reads, in one-letter code: Protein Rev (106 aa).

Residues 8 to 16 form a homomultimerization region; that stretch reads VIKFLYQSN. The segment at 13-36 is disordered; that stretch reads YQSNPPPRPEGTRQARRNRRRRWR. Positions 24–40 match the Nuclear localization signal and RNA-binding (RRE) motif; it reads TRQARRNRRRRWRARQR. Over residues 26–36 the composition is skewed to basic residues; the sequence is QARRNRRRRWR. Positions 63 to 74 match the Nuclear export signal and binding to XPO1 motif; sequence LQLPPLERLTLD. Residues serine 82 and serine 89 each carry the phosphoserine; by host modification.

It belongs to the HIV-1 REV protein family. In terms of assembly, homomultimer; when bound to the RRE. Multimeric assembly is essential for activity and may involve XPO1. Binds to human KPNB1, XPO1, TNPO1, RANBP5 and IPO7. Interacts with the viral Integrase. Interacts with human KHDRBS1. Interacts with human NAP1; this interaction decreases Rev multimerization and stimulates its activity. Interacts with human DEAD-box helicases DDX3 and DDX24; these interactions may serve for viral RNA export to the cytoplasm and packaging, respectively. Interacts with human PSIP1; this interaction may inhibit HIV-1 DNA integration by promoting dissociation of the Integrase-LEDGF/p75 complex. Post-translationally, asymmetrically arginine dimethylated at one site by host PRMT6. Methylation impairs the RNA-binding activity and export of viral RNA from the nucleus to the cytoplasm. In terms of processing, phosphorylated by protein kinase CK2. Presence of, and maybe binding to the N-terminus of the regulatory beta subunit of CK2 is necessary for CK2-mediated Rev's phosphorylation.

The protein resides in the host nucleus. It is found in the host nucleolus. The protein localises to the host cytoplasm. Escorts unspliced or incompletely spliced viral pre-mRNAs (late transcripts) out of the nucleus of infected cells. These pre-mRNAs carry a recognition sequence called Rev responsive element (RRE) located in the env gene, that is not present in fully spliced viral mRNAs (early transcripts). This function is essential since most viral proteins are translated from unspliced or partially spliced pre-mRNAs which cannot exit the nucleus by the pathway used by fully processed cellular mRNAs. Rev itself is translated from a fully spliced mRNA that readily exits the nucleus. Rev's nuclear localization signal (NLS) binds directly to KPNB1/Importin beta-1 without previous binding to KPNA1/Importin alpha-1. KPNB1 binds to the GDP bound form of RAN (Ran-GDP) and targets Rev to the nucleus. In the nucleus, the conversion from Ran-GDP to Ran-GTP dissociates Rev from KPNB1 and allows Rev's binding to the RRE in viral pre-mRNAs. Rev multimerization on the RRE via cooperative assembly exposes its nuclear export signal (NES) to the surface. Rev can then form a complex with XPO1/CRM1 and Ran-GTP, leading to nuclear export of the complex. Conversion from Ran-GTP to Ran-GDP mediates dissociation of the Rev/RRE/XPO1/RAN complex, so that Rev can return to the nucleus for a subsequent round of export. Beside KPNB1, also seems to interact with TNPO1/Transportin-1, RANBP5/IPO5 and IPO7/RANBP7 for nuclear import. The nucleoporin-like HRB/RIP is an essential cofactor that probably indirectly interacts with Rev to release HIV RNAs from the perinuclear region to the cytoplasm. In Homo sapiens (Human), this protein is Protein Rev.